The chain runs to 326 residues: Probable magnesium transporter NIPA7 (326 aa).

Residues 1 to 4 (MVSD) are Extracellular-facing. The chain crosses the membrane as a helical span at residues 5–25 (NEMGLVLAVSSSVFIGSSFIL). Topologically, residues 26-51 (KKKGLKRAAANGTRAGFGGYTYLLEP) are cytoplasmic. Residues 52 to 72 (LWWVGLVTMTFGEIANFVAYV) form a helical membrane-spanning segment. Topologically, residues 73–76 (YAPA) are extracellular. Residues 77-97 (VLVTPLGALSIIISAVLAHFL) form a helical membrane-spanning segment. At 98–104 (LDEKLRK) the chain is on the cytoplasmic side. A helical membrane pass occupies residues 105–125 (MGVWGCVCCIVGSVMIVIHAP). Topologically, residues 126-142 (QEQTPNSVEEIWKLAMQ) are extracellular. Residues 143 to 163 (PAFLIYVAISMSIVLALILYC) form a helical membrane-spanning segment. The Cytoplasmic segment spans residues 164 to 169 (EPLCGQ). Residues 170–190 (TNILVYIGICSLMGSLTVMSI) form a helical membrane-spanning segment. The Extracellular portion of the chain corresponds to 191–209 (KAVGIAIKLTFEGINQIWY). A helical transmembrane segment spans residues 210-230 (PETWFFAMVAAICVVMQMIYL). The Cytoplasmic segment spans residues 231–240 (NKALDTFNAA). A helical transmembrane segment spans residues 241 to 261 (IVSPIYYVMFTTLTIVASAIM). The Extracellular portion of the chain corresponds to 262 to 272 (FKDWNGQNTDS). Residues 273 to 293 (IASEICGFITVLTGTVILHST) traverse the membrane as a helical segment. The Cytoplasmic portion of the chain corresponds to 294–326 (REEEQASPRRMRWQDSGKSFDEEHLTSLYSPEY).

The protein belongs to the NIPA (TC 2.A.7) family. As to quaternary structure, homodimer.

It localises to the cell membrane. The protein resides in the early endosome. Acts as a Mg(2+) transporter. Can also transport other divalent cations such as Fe(2+), Sr(2+), Ba(2+), Mn(2+) and Co(2+) but to a much less extent than Mg(2+). The polypeptide is Probable magnesium transporter NIPA7 (Arabidopsis thaliana (Mouse-ear cress)).